A 561-amino-acid polypeptide reads, in one-letter code: Potassium-transporting ATPase potassium-binding subunit (561 aa).

12 helical membrane-spanning segments follow: residues 2–22 (GLGL…TPVL), 65–85 (YIRA…SLIH), 135–155 (ALGF…IAFI), 177–197 (ILLP…VPQT), 253–273 (FIET…YGVF), 280–300 (AWLL…VAAT), 327–347 (FGWA…CGAV), 353–373 (ALMP…IIWG), 378–398 (GTAY…LMVG), 413–433 (IVLA…PSAI), 482–502 (LSTS…MLLL), and 531–551 (AGIV…LGPI).

It belongs to the KdpA family. In terms of assembly, the system is composed of three essential subunits: KdpA, KdpB and KdpC.

It localises to the cell membrane. Its function is as follows. Part of the high-affinity ATP-driven potassium transport (or Kdp) system, which catalyzes the hydrolysis of ATP coupled with the electrogenic transport of potassium into the cytoplasm. This subunit binds the extracellular potassium ions and delivers the ions to the membrane domain of KdpB through an intramembrane tunnel. The sequence is that of Potassium-transporting ATPase potassium-binding subunit from Anabaena sp. (strain L31).